Here is a 338-residue protein sequence, read N- to C-terminus: Glyceraldehyde-3-phosphate dehydrogenase (338 aa).

NAD(+)-binding positions include 11–12 and G111; that span reads TI. D-glyceraldehyde 3-phosphate is bound at residue 140 to 142; that stretch reads SCN. The Nucleophile role is filled by C141. An NAD(+)-binding site is contributed by R169. Position 195-196 (195-196) interacts with D-glyceraldehyde 3-phosphate; sequence HG. Q302 serves as a coordination point for NAD(+).

Belongs to the glyceraldehyde-3-phosphate dehydrogenase family. In terms of assembly, homotetramer.

The protein localises to the cytoplasm. The catalysed reaction is D-glyceraldehyde 3-phosphate + phosphate + NADP(+) = (2R)-3-phospho-glyceroyl phosphate + NADPH + H(+). It catalyses the reaction D-glyceraldehyde 3-phosphate + phosphate + NAD(+) = (2R)-3-phospho-glyceroyl phosphate + NADH + H(+). The protein operates within carbohydrate degradation; glycolysis; pyruvate from D-glyceraldehyde 3-phosphate: step 1/5. The protein is Glyceraldehyde-3-phosphate dehydrogenase (gap) of Methanobacterium bryantii.